The primary structure comprises 287 residues: Pentatricopeptide repeat-containing protein At4g18975, chloroplastic (287 aa).

Residues 1–34 constitute a chloroplast transit peptide; the sequence is MALCNLNPTQGIFPLQGLSKSQEFICFSLLQSPR. PPR repeat units lie at residues 165-199 and 201-235; these read TMGT…HTRS and PRRL…KVSP.

The protein belongs to the PPR family. P subfamily.

It localises to the plastid. The protein resides in the chloroplast. This chain is Pentatricopeptide repeat-containing protein At4g18975, chloroplastic, found in Arabidopsis thaliana (Mouse-ear cress).